We begin with the raw amino-acid sequence, 528 residues long: MKVIFMKADLNLIKTLHPLEIKVIVNNEEEDDISASIIIEKLGFNEGQANKTIEWLNSKGIIEEIYRKLNVFYKATERGLGALRDGFVEEKIINLVSQKAVLASNLALELDIDVKEVRKAFGNLLKEGILSLDLDKQIIINCLDGTETNYQKVRVLLERAKNSDLLRESLTTEELLLISNFAKKKGADSVFFKIIEKLDLKFRLSSFGLEVKNFLMKSKLTGDELTKLTPEILKNKTYENKKFRAYNIHIPSAKTFIGRANSYLDYISKIKDKLVGLGFQEFDGPLVETEFFNNDALFMPQFHPSRDIKDVYYISDPSMQESLPEPYFSNVKLAHETGYATGSRGWRYSFSEDLSKRLVLRTHGTVLSAKQLINAKNPSRYFGVIRCFRYDQVDATHGVDFYQTEGIVIEDGVSIKTLLGLLEIFAKELAGATEIKYVPAYFPFTEPSIEIHVKHPVLGWFELGGSGIFRPEVTKPLGIDLPVIAWGIGIDRMALMHLGLNDLRDLFTYDIGDVILRRGKIDAKVRNL.

The L-phenylalanine site is built by threonine 365 and phenylalanine 444. Glutamate 446 contributes to the Mg(2+) binding site. Position 469 (phenylalanine 469) interacts with L-phenylalanine.

It belongs to the class-II aminoacyl-tRNA synthetase family. Phe-tRNA synthetase alpha subunit type 2 subfamily. In terms of assembly, tetramer of two alpha and two beta subunits. It depends on Mg(2+) as a cofactor.

The protein localises to the cytoplasm. The catalysed reaction is tRNA(Phe) + L-phenylalanine + ATP = L-phenylalanyl-tRNA(Phe) + AMP + diphosphate + H(+). This is Phenylalanine--tRNA ligase alpha subunit from Borreliella burgdorferi (strain ATCC 35210 / DSM 4680 / CIP 102532 / B31) (Borrelia burgdorferi).